A 277-amino-acid chain; its full sequence is Radial spoke head protein 9 homolog (277 aa).

Belongs to the flagellar radial spoke RSP9 family. Component of axonemal radial spoke complexes.

The protein resides in the cytoplasm. The protein localises to the cytoskeleton. Its subcellular location is the cilium axoneme. It is found in the flagellum axoneme. It localises to the cell projection. The protein resides in the kinocilium. Functions as part of axonemal radial spoke complexes that play an important part in the motility of sperm and cilia. Essential for both the radial spoke head assembly and the central pair microtubule stability in ependymal motile cilia. Required for motility of olfactory and neural cilia and for the structural integrity of ciliary axonemes in both 9+0 and 9+2 motile cilia. The protein is Radial spoke head protein 9 homolog (rsph9) of Xenopus tropicalis (Western clawed frog).